Consider the following 162-residue polypeptide: NADH-quinone oxidoreductase subunit I (162 aa).

4Fe-4S ferredoxin-type domains lie at 54–83 (RRYENGEERCIACKLCEVVCPALAITINST) and 93–122 (SSYEMDLFKCIFCGYCEESCPVDSIVETNI). The [4Fe-4S] cluster site is built by C63, C66, C69, C73, C102, C105, C108, and C112.

It belongs to the complex I 23 kDa subunit family. In terms of assembly, NDH-1 is composed of 14 different subunits. Subunits NuoA, H, J, K, L, M, N constitute the membrane sector of the complex. Requires [4Fe-4S] cluster as cofactor.

The protein resides in the cell inner membrane. The catalysed reaction is a quinone + NADH + 5 H(+)(in) = a quinol + NAD(+) + 4 H(+)(out). In terms of biological role, NDH-1 shuttles electrons from NADH, via FMN and iron-sulfur (Fe-S) centers, to quinones in the respiratory chain. The immediate electron acceptor for the enzyme in this species is believed to be ubiquinone. Couples the redox reaction to proton translocation (for every two electrons transferred, four hydrogen ions are translocated across the cytoplasmic membrane), and thus conserves the redox energy in a proton gradient. This Francisella tularensis subsp. tularensis (strain FSC 198) protein is NADH-quinone oxidoreductase subunit I.